Reading from the N-terminus, the 265-residue chain is Anaphase-promoting complex subunit 9 (265 aa).

As to quaternary structure, the APC/C is composed of at least 13 subunits that stay tightly associated throughout the cell cycle: APC1, APC2, APC4, APC5, APC9, APC11, CDC16, CDC23, CDC26, CDC27, DOC1, MND2 and SWM1.

The protein resides in the cytoplasm. The protein localises to the nucleus. It functions in the pathway protein modification; protein ubiquitination. Its function is as follows. Component of the anaphase promoting complex/cyclosome (APC/C), a cell cycle-regulated E3 ubiquitin-protein ligase complex that controls progression through mitosis and the G1 phase of the cell cycle. The APC/C is thought to confer substrate specificity and, in the presence of ubiquitin-conjugating E2 enzymes, it catalyzes the formation of protein-ubiquitin conjugates that are subsequently degraded by the 26S proteasome. In early mitosis, the APC/C is activated by CDC20 and targets securin PDS1, the B-type cyclin CLB5, and other anaphase inhibitory proteins for proteolysis, thereby triggering the separation of sister chromatids at the metaphase-to-anaphase transition. In late mitosis and in G1, degradation of CLB5 allows activation of the APC/C by CDH1, which is needed to destroy CDC20 and the B-type cyclin CLB2 to allow exit from mitosis and creating the low CDK state necessary for cytokinesis and for reforming prereplicative complexes in G1 prior to another round of replication. The sequence is that of Anaphase-promoting complex subunit 9 (APC9) from Saccharomyces cerevisiae (strain ATCC 204508 / S288c) (Baker's yeast).